A 627-amino-acid polypeptide reads, in one-letter code: DNA-directed RNA polymerase subunit gamma (627 aa).

The Zn(2+) site is built by C70, C72, C85, and C88. Mg(2+)-binding residues include D468, D470, and D472.

It belongs to the RNA polymerase beta' chain family. RpoC1 subfamily. In cyanobacteria the RNAP catalytic core is composed of 2 alpha, 1 beta, 1 beta', 1 gamma and 1 omega subunit. When a sigma factor is associated with the core the holoenzyme is formed, which can initiate transcription. The cofactor is Mg(2+). Zn(2+) is required as a cofactor.

It catalyses the reaction RNA(n) + a ribonucleoside 5'-triphosphate = RNA(n+1) + diphosphate. Functionally, DNA-dependent RNA polymerase catalyzes the transcription of DNA into RNA using the four ribonucleoside triphosphates as substrates. The sequence is that of DNA-directed RNA polymerase subunit gamma from Synechococcus sp. (strain JA-3-3Ab) (Cyanobacteria bacterium Yellowstone A-Prime).